The following is a 146-amino-acid chain: Hemoglobin subunit beta (146 aa).

At Val-1 the chain carries N-acetylvaline. A Globin domain is found at 2-146; that stretch reads HLTAEEKSAV…VATALAHKYH (145 aa). At Thr-12 the chain carries Phosphothreonine. Ser-44 is modified (phosphoserine). Lys-59 bears the N6-acetyllysine mark. His-63 contacts heme b. Lys-82 is subject to N6-acetyllysine. His-92 contacts heme b. At Cys-93 the chain carries S-nitrosocysteine. Lys-144 is subject to N6-acetyllysine.

This sequence belongs to the globin family. As to quaternary structure, heterotetramer of two alpha chains and two beta chains. As to expression, red blood cells.

In terms of biological role, involved in oxygen transport from the lung to the various peripheral tissues. The protein is Hemoglobin subunit beta (HBB) of Cebus albifrons (White-fronted capuchin).